Here is a 574-residue protein sequence, read N- to C-terminus: Probable cytochrome c oxidase subunit 1 (574 aa).

The chain crosses the membrane as a helical span at residues isoleucine 40 to leucine 60. Histidine 86 lines the Fe(II)-heme a pocket. The next 6 helical transmembrane spans lie at isoleucine 89–leucine 109, leucine 121–isoleucine 141, leucine 170–isoleucine 190, isoleucine 213–glycine 233, leucine 258–valine 278, and isoleucine 290–valine 310. Residues histidine 264 and tyrosine 268 each contribute to the Cu cation site. Residues histidine 264 to tyrosine 268 constitute a cross-link (1'-histidyl-3'-tyrosine (His-Tyr)). Residues histidine 313 and histidine 314 each coordinate Cu cation. A run of 2 helical transmembrane segments spans residues methionine 315–valine 335 and methionine 359–leucine 379. Histidine 397 contributes to the heme a3 binding site. 3 helical membrane-spanning segments follow: residues phenylalanine 398–phenylalanine 418, leucine 433–glycine 453, and valine 476–phenylalanine 496. Residue histidine 399 coordinates Fe(II)-heme a.

This sequence belongs to the heme-copper respiratory oxidase family. As to quaternary structure, associates with subunits II, III and IV to form cytochrome c oxidase. Requires Cu(2+) as cofactor. The cofactor is heme.

The protein resides in the cell membrane. The catalysed reaction is 4 Fe(II)-[cytochrome c] + O2 + 8 H(+)(in) = 4 Fe(III)-[cytochrome c] + 2 H2O + 4 H(+)(out). It functions in the pathway energy metabolism; oxidative phosphorylation. Cytochrome c oxidase is the component of the respiratory chain that catalyzes the reduction of oxygen to water. Subunits 1-3 form the functional core of the enzyme complex. CO I is the catalytic subunit of the enzyme. Electrons originating in cytochrome c are transferred via the copper A center of subunit 2 and heme A of subunit 1 to the bimetallic center formed by heme A3 and copper B. This Mycobacterium leprae (strain TN) protein is Probable cytochrome c oxidase subunit 1 (ctaD).